A 285-amino-acid polypeptide reads, in one-letter code: Non-homologous end joining protein Ku (285 aa).

The 168-residue stretch at 9 to 176 (ISFGLVNVPV…PAEIRHLEAS (168 aa)) folds into the Ku domain. Residues 250 to 285 (AMTDQKKQQNTAESETEEKPTKSTLTPRGRRKVKGA) form a disordered region.

It belongs to the prokaryotic Ku family. In terms of assembly, homodimer. Interacts with LigD.

Functionally, with LigD forms a non-homologous end joining (NHEJ) DNA repair enzyme, which repairs dsDNA breaks with reduced fidelity. Binds linear dsDNA with 5'- and 3'- overhangs but not closed circular dsDNA nor ssDNA. Recruits and stimulates the ligase activity of LigD. The sequence is that of Non-homologous end joining protein Ku from Desulfitobacterium hafniense (strain DSM 10664 / DCB-2).